Here is a 1059-residue protein sequence, read N- to C-terminus: Pleckstrin homology domain-containing family M member 1 (1059 aa).

An RUN domain is found at T40–A182. A Phosphoserine modification is found at S218. Disordered stretches follow at residues S218 to R244, L272 to F334, and S354 to S411. 2 stretches are compositionally biased toward polar residues: residues S313–F334 and G392–S401. Residues S430, S433, and S488 each carry the phosphoserine modification. In terms of domain architecture, PH 1 spans G536–Q627. An LIR motif is present at residues E634–I640. Positions L657 to S1059 are interaction with RAB7A. In terms of domain architecture, PH 2 spans D686–A780. The segment at Q989 to C1043 adopts a Phorbol-ester/DAG-type zinc-finger fold.

In terms of assembly, interacts (via N- and C-terminus) with RAB7A (GTP-bound form). Simultaneously interacts with RAB7A and ARL8B; bringing about clustering and fusion of late endosomes and lysosomes. Interacts (via RUN domain) with ARL8B (GTP-bound form); the interaction is required for PLEKHM1 localization to lysosomes and for ARL8B function in delivery and degradation of endocytic and autophagic cargo in lysosomes. PLEKHM1 and PLEKHM2 compete for interaction with ARL8B. Interacts with ARL8A; the interaction is weaker than with ARL8B. Interacts with VPS41, VPS11, VPS18, VPS33A and VPS39; indicative for an association with the HOPS complex; the interactions with, at least, VPS41, VPS11, VPS18 and VPS33A require ARL8B. Interacts with GABARAP, GABARAPL, GABARAPL2, MAP1LC3A, MAP1LC3B and MAP1LC3C. Interacts with PAFAH1B. Interacts (via N- and C-terminus) with NDEL1. Interacts (via C-terminus) with MAP3K7. Interacts (via N- and C-terminus) with FAM98A. Interacts (via C-terminus) with DEF8; this interaction is weak but increased in a RAB7A-dependent manner. May interact with sialyl-lex-positive protein. Expressed in testis, skeletal muscle, lung, liver, spleen, brain, heart, kidney and bone. Weakly expressed in monocytes (at protein level).

It is found in the autolysosome membrane. It localises to the endosome membrane. The protein resides in the late endosome membrane. Its subcellular location is the lysosome membrane. Acts as a multivalent adapter protein that regulates Rab7-dependent and HOPS complex-dependent fusion events in the endolysosomal system and couples autophagic and the endocytic trafficking pathways. Acts as a dual effector of RAB7A and ARL8B that simultaneously binds these GTPases, bringing about clustering and fusion of late endosomes and lysosomes. Required for late stages of endolysosomal maturation, facilitating both endocytosis-mediated degradation of growth factor receptors and autophagosome clearance. Interaction with Arl8b is a crucial factor in the terminal maturation of autophagosomes and to mediate autophagosome-lysosome fusion. Positively regulates lysosome peripheral distribution and ruffled border formation in osteoclasts. May be involved in negative regulation of endocytic transport from early endosome to late endosome/lysosome implicating its association with Rab7. May have a role in sialyl-lex-mediated transduction of apoptotic signals. Involved in bone resorption. The protein is Pleckstrin homology domain-containing family M member 1 of Rattus norvegicus (Rat).